Reading from the N-terminus, the 262-residue chain is Phosphonates import ATP-binding protein PhnC (262 aa).

The ABC transporter domain maps to isoleucine 5 to asparagine 253. Position 37-44 (glycine 37–serine 44) interacts with ATP.

Belongs to the ABC transporter superfamily. Phosphonates importer (TC 3.A.1.9.1) family. The complex is composed of two ATP-binding proteins (PhnC), two transmembrane proteins (PhnE) and a solute-binding protein (PhnD).

It is found in the cell inner membrane. The enzyme catalyses phosphonate(out) + ATP + H2O = phosphonate(in) + ADP + phosphate + H(+). Functionally, part of the ABC transporter complex PhnCDE involved in phosphonates import. Responsible for energy coupling to the transport system. The polypeptide is Phosphonates import ATP-binding protein PhnC (Shigella boydii serotype 4 (strain Sb227)).